Reading from the N-terminus, the 228-residue chain is Sugar fermentation stimulation protein homolog (228 aa).

This sequence belongs to the SfsA family.

In Psychromonas ingrahamii (strain DSM 17664 / CCUG 51855 / 37), this protein is Sugar fermentation stimulation protein homolog.